A 144-amino-acid chain; its full sequence is Bacilliredoxin BC_2157 (144 aa).

This sequence belongs to the bacilliredoxin family.

The chain is Bacilliredoxin BC_2157 from Bacillus cereus (strain ATCC 14579 / DSM 31 / CCUG 7414 / JCM 2152 / NBRC 15305 / NCIMB 9373 / NCTC 2599 / NRRL B-3711).